Reading from the N-terminus, the 257-residue chain is GTP cyclohydrolase III (257 aa).

Belongs to the archaeal-type GTP cyclohydrolase family.

It catalyses the reaction GTP + 3 H2O = 2-amino-5-formylamino-6-(5-phospho-D-ribosylamino)pyrimidin-4(3H)-one + 2 phosphate + 2 H(+). Functionally, catalyzes the formation of 2-amino-5-formylamino-6-ribofuranosylamino-4(3H)-pyrimidinone ribonucleotide monophosphate and inorganic phosphate from GTP. Also has an independent pyrophosphate phosphohydrolase activity. In Halorubrum lacusprofundi (strain ATCC 49239 / DSM 5036 / JCM 8891 / ACAM 34), this protein is GTP cyclohydrolase III.